Consider the following 268-residue polypeptide: MRNDVHMGHKARKRFGQNFLNDPYIIDGIVSAINPRPGQNLVEIGPGLGAITEPVGREVDKFTVIELDRDLAERLRTHPELADKLTIHEGDAMRFDFTQLVKPNNKLRIFGNLPYNISTPLMFHLFEFHKDIQDMHFMLQKEVVNRLAAGPGSKAYGRLTVMAQYYCKVVPVLEVPPTAFVPPPKVDSAVVRLVPYETLPHPANNLQWLERVCREGFNQRRKTVRNCYKSLMSEQVLEELGVNPGMRPENLTLQQFVAMANWLDANHK.

Residues Asn18, Leu20, Gly45, Glu66, Asp91, and Asn112 each contribute to the S-adenosyl-L-methionine site.

The protein belongs to the class I-like SAM-binding methyltransferase superfamily. rRNA adenine N(6)-methyltransferase family. RsmA subfamily.

It is found in the cytoplasm. It catalyses the reaction adenosine(1518)/adenosine(1519) in 16S rRNA + 4 S-adenosyl-L-methionine = N(6)-dimethyladenosine(1518)/N(6)-dimethyladenosine(1519) in 16S rRNA + 4 S-adenosyl-L-homocysteine + 4 H(+). Specifically dimethylates two adjacent adenosines (A1518 and A1519) in the loop of a conserved hairpin near the 3'-end of 16S rRNA in the 30S particle. May play a critical role in biogenesis of 30S subunits. This is Ribosomal RNA small subunit methyltransferase A from Vibrio vulnificus (strain CMCP6).